Reading from the N-terminus, the 445-residue chain is Membrane protein insertase YidC (445 aa).

A run of 5 helical transmembrane segments spans residues 6-26, 248-268, 313-333, 352-372, and 388-408; these read VVAI…PIKV, FGWA…PLYH, ASGC…WSVI, LSAG…VASY, and GIIM…GLFL.

The protein belongs to the OXA1/ALB3/YidC family. Type 1 subfamily. In terms of assembly, interacts with the Sec translocase complex via SecD. Specifically interacts with transmembrane segments of nascent integral membrane proteins during membrane integration.

It localises to the cell inner membrane. Required for the insertion and/or proper folding and/or complex formation of integral membrane proteins into the membrane. Involved in integration of membrane proteins that insert both dependently and independently of the Sec translocase complex, as well as at least some lipoproteins. Aids folding of multispanning membrane proteins. The protein is Membrane protein insertase YidC of Thermotoga maritima (strain ATCC 43589 / DSM 3109 / JCM 10099 / NBRC 100826 / MSB8).